We begin with the raw amino-acid sequence, 439 residues long: Glucose-6-phosphate 1-dehydrogenase (439 aa).

K100 contributes to the NADP(+) binding site. H130, K134, E168, and D187 together coordinate substrate. H192 acts as the Proton acceptor in catalysis. Position 288 (K288) interacts with substrate.

Belongs to the glucose-6-phosphate dehydrogenase family.

The enzyme catalyses D-glucose 6-phosphate + NADP(+) = 6-phospho-D-glucono-1,5-lactone + NADPH + H(+). It functions in the pathway carbohydrate degradation; pentose phosphate pathway; D-ribulose 5-phosphate from D-glucose 6-phosphate (oxidative stage): step 1/3. Catalyzes the oxidation of glucose 6-phosphate to 6-phosphogluconolactone. This Chlamydia trachomatis serovar D (strain ATCC VR-885 / DSM 19411 / UW-3/Cx) protein is Glucose-6-phosphate 1-dehydrogenase.